The following is a 400-amino-acid chain: Dual specificity mitogen-activated protein kinase kinase 2 (400 aa).

An N-acetylmethionine modification is found at Met-1. At Ser-23 the chain carries Phosphoserine. Residues 72-369 form the Protein kinase domain; it reads FERISELGAG…LKMLTNHTFI (298 aa). ATP-binding positions include 78–86 and Lys-101; that span reads LGAGNGGVV. The Proton acceptor role is filled by Asp-194. (Microbial infection) O-acetylserine; by Yersinia YopJ; alternate occurs at positions 222 and 226. Ser-222 bears the Phosphoserine; by RAF; alternate mark. Ser-226 is subject to Phosphoserine; alternate. A disordered region spans residues 286–310; the sequence is GEEGEPHSISPRPRPPGRPVSGHGM. A phosphoserine mark is found at Ser-293, Ser-295, and Ser-306. Phosphothreonine is present on residues Thr-394 and Thr-396.

It belongs to the protein kinase superfamily. STE Ser/Thr protein kinase family. MAP kinase kinase subfamily. As to quaternary structure, interacts with MORG1. Interacts with SGK1. Interacts with KSR1. Interacts with KSR1 and BRAF; the interaction with KSR1 mediates KSR1-BRAF dimerization. Interacts with GLS. The cofactor is Mg(2+). MAPKK is itself dependent on Ser/Thr phosphorylation for activity catalyzed by MAP kinase kinase kinases (RAF or MEKK1). Phosphorylated by MAP2K1/MEK1. Post-translationally, (Microbial infection) Acetylation of Ser-222 and Ser-226 by Yersinia YopJ prevents phosphorylation and activation, thus blocking the MAPK signaling pathway.

Its subcellular location is the cytoplasm. It localises to the membrane. The enzyme catalyses L-seryl-[protein] + ATP = O-phospho-L-seryl-[protein] + ADP + H(+). It catalyses the reaction L-threonyl-[protein] + ATP = O-phospho-L-threonyl-[protein] + ADP + H(+). The catalysed reaction is L-tyrosyl-[protein] + ATP = O-phospho-L-tyrosyl-[protein] + ADP + H(+). Its function is as follows. Catalyzes the concomitant phosphorylation of a threonine and a tyrosine residue in a Thr-Glu-Tyr sequence located in MAP kinases. Activates the ERK1 and ERK2 MAP kinases. Activates BRAF in a KSR1 or KSR2-dependent manner; by binding to KSR1 or KSR2 releases the inhibitory intramolecular interaction between KSR1 or KSR2 protein kinase and N-terminal domains which promotes KSR1 or KSR2-BRAF dimerization and BRAF activation. The sequence is that of Dual specificity mitogen-activated protein kinase kinase 2 (MAP2K2) from Homo sapiens (Human).